Here is a 745-residue protein sequence, read N- to C-terminus: Phosphoribosylformylglycinamidine synthase subunit PurL (745 aa).

Histidine 50 is a catalytic residue. Residues tyrosine 53 and lysine 92 each coordinate ATP. A Mg(2+)-binding site is contributed by glutamate 94. Residues serine 95–histidine 98 and arginine 117 contribute to the substrate site. Histidine 96 acts as the Proton acceptor in catalysis. Aspartate 118 contributes to the Mg(2+) binding site. Position 241 (glutamine 241) interacts with substrate. Aspartate 269 provides a ligand contact to Mg(2+). Glutamate 313 to glutamine 315 contributes to the substrate binding site. 2 residues coordinate ATP: aspartate 495 and glycine 532. Asparagine 533 is a Mg(2+) binding site. Serine 535 contributes to the substrate binding site.

The protein belongs to the FGAMS family. Monomer. Part of the FGAM synthase complex composed of 1 PurL, 1 PurQ and 2 PurS subunits.

The protein resides in the cytoplasm. It catalyses the reaction N(2)-formyl-N(1)-(5-phospho-beta-D-ribosyl)glycinamide + L-glutamine + ATP + H2O = 2-formamido-N(1)-(5-O-phospho-beta-D-ribosyl)acetamidine + L-glutamate + ADP + phosphate + H(+). The protein operates within purine metabolism; IMP biosynthesis via de novo pathway; 5-amino-1-(5-phospho-D-ribosyl)imidazole from N(2)-formyl-N(1)-(5-phospho-D-ribosyl)glycinamide: step 1/2. Its function is as follows. Part of the phosphoribosylformylglycinamidine synthase complex involved in the purines biosynthetic pathway. Catalyzes the ATP-dependent conversion of formylglycinamide ribonucleotide (FGAR) and glutamine to yield formylglycinamidine ribonucleotide (FGAM) and glutamate. The FGAM synthase complex is composed of three subunits. PurQ produces an ammonia molecule by converting glutamine to glutamate. PurL transfers the ammonia molecule to FGAR to form FGAM in an ATP-dependent manner. PurS interacts with PurQ and PurL and is thought to assist in the transfer of the ammonia molecule from PurQ to PurL. The sequence is that of Phosphoribosylformylglycinamidine synthase subunit PurL from Allorhizobium ampelinum (strain ATCC BAA-846 / DSM 112012 / S4) (Agrobacterium vitis (strain S4)).